We begin with the raw amino-acid sequence, 815 residues long: Phenylalanine--tRNA ligase beta subunit (815 aa).

Positions Ala40–Arg155 constitute a tRNA-binding domain. Positions Pro406–Ala485 constitute a B5 domain. Mg(2+)-binding residues include Asp463, Asp469, Glu472, and Glu473. The FDX-ACB domain occupies Ser712–Arg814.

This sequence belongs to the phenylalanyl-tRNA synthetase beta subunit family. Type 1 subfamily. Tetramer of two alpha and two beta subunits. The cofactor is Mg(2+).

Its subcellular location is the cytoplasm. The enzyme catalyses tRNA(Phe) + L-phenylalanine + ATP = L-phenylalanyl-tRNA(Phe) + AMP + diphosphate + H(+). In Cupriavidus pinatubonensis (strain JMP 134 / LMG 1197) (Cupriavidus necator (strain JMP 134)), this protein is Phenylalanine--tRNA ligase beta subunit.